A 231-amino-acid chain; its full sequence is Fibronectin type III domain-containing protein 4 (231 aa).

The first 40 residues, 1-40 (MPLAPPANSVETMASLMPLSPYLSPTVLLLVSCDLGFVRA), serve as a signal peptide directing secretion. The Extracellular segment spans residues 41 to 163 (DRPPSPVNVT…GLDGERPLQT (123 aa)). Positions 43-136 (PPSPVNVTVT…PRVHFRTLKG (94 aa)) constitute a Fibronectin type-III domain. Asn48 and Asn143 each carry an N-linked (GlcNAc...) asparagine glycan. A disordered region spans residues 118–156 (GLRGESPPGPRVHFRTLKGSDRLPSNSSSPGDITVEGLD). Residues 164-184 (GEVVIIVVVLLMWAAVIGLFC) form a helical membrane-spanning segment. Topologically, residues 185–231 (RQYDIIKDNDSNNNPKEKGKGPEQSPQGRPVGTTRQKKSPSINTIDV) are cytoplasmic. The span at 193–205 (NDSNNNPKEKGKG) shows a compositional bias: basic and acidic residues. The segment at 193–231 (NDSNNNPKEKGKGPEQSPQGRPVGTTRQKKSPSINTIDV) is disordered.

As to expression, predominantly expressed in the liver and in the brain, including in the cortex, hypothalamus and hippocampus. Also expressed in heart, lung, kidney and testis. In the colon, expressed in the epithelium and in a subset of immune cells in lymphoid aggregates.

The protein localises to the membrane. It localises to the secreted. Its function is as follows. Has anti-inflammatory properties. In the colon, acts on macrophages to down-regulate inflammation. May suppress osteoclastogenesis and mature osteoclast resorptive function. In white adipose tissue, decreases local inflammation, via interaction with GPR116. Also required for proper systemic glucose tolerance, specifically sensitizing white adipocytes to insulin and promoting glucose uptake. The insulin sensitizing function in adipose tissue is mediated by interaction with ADGRF5/GPR116 and activation of cAMP signaling. This chain is Fibronectin type III domain-containing protein 4 (Fndc4), found in Mus musculus (Mouse).